The primary structure comprises 1638 residues: DNA polymerase III PolC-type (1638 aa).

Residues 193–212 (SEIKKQRSEERESKNTREAK) form a disordered region. Basic and acidic residues predominate over residues 194–212 (EIKKQRSEERESKNTREAK). An Exonuclease domain is found at 596-752 (YVVFDVETTG…FDAEATGRLL (157 aa)).

Belongs to the DNA polymerase type-C family. PolC subfamily.

The protein localises to the cytoplasm. The catalysed reaction is DNA(n) + a 2'-deoxyribonucleoside 5'-triphosphate = DNA(n+1) + diphosphate. In terms of biological role, required for replicative DNA synthesis. This DNA polymerase also exhibits 3' to 5' exonuclease activity. This Lactococcus lactis subsp. lactis (strain IL1403) (Streptococcus lactis) protein is DNA polymerase III PolC-type.